A 211-amino-acid chain; its full sequence is Uracil phosphoribosyltransferase (211 aa).

5-phospho-alpha-D-ribose 1-diphosphate-binding positions include R78, R103, and 130–138; that span reads DPMLATGGT. Uracil is bound by residues I195 and 200–202; that span reads GDA. Residue D201 coordinates 5-phospho-alpha-D-ribose 1-diphosphate.

Belongs to the UPRTase family. The cofactor is Mg(2+).

It catalyses the reaction UMP + diphosphate = 5-phospho-alpha-D-ribose 1-diphosphate + uracil. It functions in the pathway pyrimidine metabolism; UMP biosynthesis via salvage pathway; UMP from uracil: step 1/1. With respect to regulation, allosterically activated by GTP. Catalyzes the conversion of uracil and 5-phospho-alpha-D-ribose 1-diphosphate (PRPP) to UMP and diphosphate. In Streptomyces avermitilis (strain ATCC 31267 / DSM 46492 / JCM 5070 / NBRC 14893 / NCIMB 12804 / NRRL 8165 / MA-4680), this protein is Uracil phosphoribosyltransferase.